A 792-amino-acid chain; its full sequence is Ribonucleoside-diphosphate reductase large subunit (792 aa).

An ATP-cone domain is found at 1 to 92 (MHVIKRDGRQ…VSNLHKEAKK (92 aa)). Residues 5 to 6 (KR), 11 to 17 (ERVMFDK), Thr-53, and Asp-57 each bind ATP. Residue Lys-17 is modified to N6-acetyllysine. The GDP site is built by Ser-202 and Ser-217. A disulfide bond links Cys-218 and Cys-444. Residues 226-228 (DSI), Lys-243, Arg-256, and 263-264 (AG) contribute to the dTTP site. Position 376 is an N6-acetyllysine (Lys-376). Catalysis depends on Ser-427, which acts as the Proton acceptor. Residue Cys-429 is the Cysteine radical intermediate of the active site. GDP contacts are provided by residues Glu-431 and 604–607 (TAST). Glu-431 serves as the catalytic Proton acceptor. Thr-751 carries the post-translational modification Phosphothreonine.

Belongs to the ribonucleoside diphosphate reductase large chain family. As to quaternary structure, heterodimer of a large and a small subunit. Interacts with RRM2B. Interacts with AHCYL1 which inhibits its activity.

The protein localises to the cytoplasm. It catalyses the reaction a 2'-deoxyribonucleoside 5'-diphosphate + [thioredoxin]-disulfide + H2O = a ribonucleoside 5'-diphosphate + [thioredoxin]-dithiol. With respect to regulation, under complex allosteric control mediated by deoxynucleoside triphosphates and ATP binding to separate specificity and activation sites on the M1 subunit. The type of nucleotide bound at the specificity site determines substrate preference. It seems probable that ATP makes the enzyme reduce CDP and UDP, dGTP favors ADP reduction and dTTP favors GDP reduction. Stimulated by ATP and inhibited by dATP binding to the activity site, the dATP inhibition is mediated by AHCYL1 which stabilizes dATP in the site. In terms of biological role, provides the precursors necessary for DNA synthesis. Catalyzes the biosynthesis of deoxyribonucleotides from the corresponding ribonucleotides. This is Ribonucleoside-diphosphate reductase large subunit (RRM1) from Pongo abelii (Sumatran orangutan).